We begin with the raw amino-acid sequence, 29 residues long: Cyclotide psyleio D (29 aa).

Positions 1–29 (GLPVCGESCFGGTCNTPGCSCTWPVCTRD) form a cross-link, cyclopeptide (Gly-Asp). 3 disulfides stabilise this stretch: cysteine 5–cysteine 19, cysteine 9–cysteine 21, and cysteine 14–cysteine 26.

This is a cyclic peptide.

Probably participates in a plant defense mechanism. The polypeptide is Cyclotide psyleio D (Psychotria brachyceras).